We begin with the raw amino-acid sequence, 424 residues long: Histidine--tRNA ligase (424 aa).

The protein belongs to the class-II aminoacyl-tRNA synthetase family. As to quaternary structure, homodimer.

The protein resides in the cytoplasm. It carries out the reaction tRNA(His) + L-histidine + ATP = L-histidyl-tRNA(His) + AMP + diphosphate + H(+). The protein is Histidine--tRNA ligase of Shewanella pealeana (strain ATCC 700345 / ANG-SQ1).